The chain runs to 427 residues: UDP-N-acetylglucosamine 1-carboxyvinyltransferase 1 (427 aa).

24-25 (KN) is a phosphoenolpyruvate binding site. Arginine 97 provides a ligand contact to UDP-N-acetyl-alpha-D-glucosamine. Residue cysteine 121 is the Proton donor of the active site. At cysteine 121 the chain carries 2-(S-cysteinyl)pyruvic acid O-phosphothioketal. UDP-N-acetyl-alpha-D-glucosamine-binding positions include 126–130 (RPIDL), aspartate 309, and valine 331.

It belongs to the EPSP synthase family. MurA subfamily.

The protein resides in the cytoplasm. It carries out the reaction phosphoenolpyruvate + UDP-N-acetyl-alpha-D-glucosamine = UDP-N-acetyl-3-O-(1-carboxyvinyl)-alpha-D-glucosamine + phosphate. It participates in cell wall biogenesis; peptidoglycan biosynthesis. In terms of biological role, cell wall formation. Adds enolpyruvyl to UDP-N-acetylglucosamine. The protein is UDP-N-acetylglucosamine 1-carboxyvinyltransferase 1 of Lactococcus lactis subsp. lactis (strain IL1403) (Streptococcus lactis).